The sequence spans 129 residues: Small ribosomal subunit protein uS11 (129 aa).

This sequence belongs to the universal ribosomal protein uS11 family. In terms of assembly, part of the 30S ribosomal subunit. Interacts with proteins S7 and S18. Binds to IF-3.

Located on the platform of the 30S subunit, it bridges several disparate RNA helices of the 16S rRNA. Forms part of the Shine-Dalgarno cleft in the 70S ribosome. The sequence is that of Small ribosomal subunit protein uS11 from Thermosipho melanesiensis (strain DSM 12029 / CIP 104789 / BI429).